Consider the following 1016-residue polypeptide: Enhancer of polycomb-like protein 1 (1016 aa).

Disordered stretches follow at residues 1-50 (MAIH…NDLE), 96-119 (LLGS…DASV), 450-488 (KEED…TIGT), 499-518 (GQVH…VKLP), and 842-1016 (ARMR…PNRK). Residues 35-50 (YKQSDLPTLNASNDLE) show a composition bias toward polar residues. Basic and acidic residues-rich tracts occupy residues 103–116 (DGDK…KKTD) and 457–473 (ESSK…DSSR). Positions 475–488 (GSATSMPGSATIGT) are enriched in polar residues. The segment covering 842 to 883 (ARMRTLQQQQRNNKQQAAGQSSGSSSASLGSNTNSNSSISGQ) has biased composition (low complexity). Polar residues predominate over residues 884 to 902 (ADQGQTNLTNSGITRQGGA). A compositionally biased stretch (low complexity) spans 904-923 (VNGSQTSTTNNTRSSVSGGS). The segment covering 928–956 (LPTQSSQRSNTNSPLLASQPQGYSQQQKF) has biased composition (polar residues). The segment covering 960 to 971 (PPTSQSQSQSPT) has biased composition (low complexity). Polar residues predominate over residues 976 to 994 (QLQTSKMYNKHGSNITPSN).

This sequence belongs to the enhancer of polycomb family. In terms of assembly, component of the NuA4 histone acetyltransferase complex.

The protein localises to the nucleus. In terms of biological role, component of the NuA4 histone acetyltransferase complex which is involved in transcriptional activation of selected genes principally by acetylation of nucleosomal histone H4 and H2A. The NuA4 complex is also involved in DNA repair. Involved in gene silencing by neighboring heterochromatin, blockage of the silencing spreading along the chromosome, and required for cell cycle progression through G2/M. This Debaryomyces hansenii (strain ATCC 36239 / CBS 767 / BCRC 21394 / JCM 1990 / NBRC 0083 / IGC 2968) (Yeast) protein is Enhancer of polycomb-like protein 1 (EPL1).